The chain runs to 258 residues: Cytosolic Fe-S cluster assembly factor Nubp2 homolog (258 aa).

14–21 contacts ATP; the sequence is GKGGVGKS. Residues cysteine 188 and cysteine 191 each coordinate [4Fe-4S] cluster.

The protein belongs to the Mrp/NBP35 ATP-binding proteins family. NUBP2/CFD1 subfamily. As to quaternary structure, heterotetramer of 2 Nubp1 and 2 Nubp2 chains. [4Fe-4S] cluster serves as cofactor.

It is found in the cytoplasm. Component of the cytosolic iron-sulfur (Fe/S) protein assembly (CIA) machinery. Required for maturation of extramitochondrial Fe-S proteins. The Nubp1-Nubp2 heterotetramer forms a Fe-S scaffold complex, mediating the de novo assembly of an Fe-S cluster and its transfer to target apoproteins. In Drosophila pseudoobscura pseudoobscura (Fruit fly), this protein is Cytosolic Fe-S cluster assembly factor Nubp2 homolog.